A 1420-amino-acid polypeptide reads, in one-letter code: DNA-directed RNA polymerase subunit beta' (1420 aa).

Zn(2+) is bound by residues cysteine 70, cysteine 72, cysteine 85, and cysteine 88. Positions 464, 466, and 468 each coordinate Mg(2+). Zn(2+) is bound by residues cysteine 823, cysteine 897, cysteine 904, and cysteine 907.

This sequence belongs to the RNA polymerase beta' chain family. As to quaternary structure, the RNAP catalytic core consists of 2 alpha, 1 beta, 1 beta' and 1 omega subunit. When a sigma factor is associated with the core the holoenzyme is formed, which can initiate transcription. The cofactor is Mg(2+). It depends on Zn(2+) as a cofactor.

The enzyme catalyses RNA(n) + a ribonucleoside 5'-triphosphate = RNA(n+1) + diphosphate. DNA-dependent RNA polymerase catalyzes the transcription of DNA into RNA using the four ribonucleoside triphosphates as substrates. This Polynucleobacter asymbioticus (strain DSM 18221 / CIP 109841 / QLW-P1DMWA-1) (Polynucleobacter necessarius subsp. asymbioticus) protein is DNA-directed RNA polymerase subunit beta'.